We begin with the raw amino-acid sequence, 642 residues long: Threonine--tRNA ligase (642 aa).

Positions 1-61 (MPVITLPDGS…ENDATLAIIT (61 aa)) constitute a TGS domain. The interval 243–534 (DHRKIGKQLD…LTEEFAGFFP (292 aa)) is catalytic. Zn(2+)-binding residues include C334, H385, and H511.

This sequence belongs to the class-II aminoacyl-tRNA synthetase family. As to quaternary structure, homodimer. Zn(2+) serves as cofactor.

It is found in the cytoplasm. It carries out the reaction tRNA(Thr) + L-threonine + ATP = L-threonyl-tRNA(Thr) + AMP + diphosphate + H(+). Catalyzes the attachment of threonine to tRNA(Thr) in a two-step reaction: L-threonine is first activated by ATP to form Thr-AMP and then transferred to the acceptor end of tRNA(Thr). Also edits incorrectly charged L-seryl-tRNA(Thr). In Salmonella dublin (strain CT_02021853), this protein is Threonine--tRNA ligase.